Reading from the N-terminus, the 122-residue chain is Large ribosomal subunit protein uL14 (122 aa).

The protein belongs to the universal ribosomal protein uL14 family. Part of the 50S ribosomal subunit. Forms a cluster with proteins L3 and L19. In the 70S ribosome, L14 and L19 interact and together make contacts with the 16S rRNA in bridges B5 and B8.

Binds to 23S rRNA. Forms part of two intersubunit bridges in the 70S ribosome. This Petrotoga mobilis (strain DSM 10674 / SJ95) protein is Large ribosomal subunit protein uL14.